A 635-amino-acid polypeptide reads, in one-letter code: Protein phosphatase PP2A regulatory subunit A (635 aa).

Over residues M1–S27 the composition is skewed to low complexity. A disordered region spans residues M1–N33. 15 HEAT repeats span residues E34–R72, T73–Q111, Y112–Q150, L151–S189, L190–L228, G229–G273, D274–A316, Y317–I356, I357–Q395, V396–L434, L435–F473, F474–W512, C513–V553, V554–L598, and I599–L632.

The protein belongs to the phosphatase 2A regulatory subunit A family. In terms of assembly, PP2A exists in several trimeric forms, all of which consist of a core composed of a catalytic subunit associated with a 65 kDa regulatory subunit (PR65) (subunit A). The core complex associates with a third, variable subunit (subunit B), which confers distinct properties to the holoenzyme.

Its function is as follows. Phosphatase 2A affects a variety of biological processes in the cell such as transcription, cell cycle progression and cellular morphogenesis, and provides an initial identification of critical substrates for this phosphatase. The regulatory subunit may direct the catalytic subunit to distinct, albeit overlapping, subsets of substrates. The sequence is that of Protein phosphatase PP2A regulatory subunit A (TPD3) from Saccharomyces cerevisiae (strain ATCC 204508 / S288c) (Baker's yeast).